The sequence spans 326 residues: Heterodimeric geranylgeranyl pyrophosphate synthase small subunit, chloroplastic (326 aa).

The N-terminal 33 residues, 1–33, are a transit peptide targeting the chloroplast; it reads MLFSGSAIPLSSFCSLPEKPHTLPMKLSPAAIR. K88 and H120 together coordinate isopentenyl diphosphate. 2 residues coordinate Mg(2+): D127 and D133. Position 138 (R138) interacts with dimethylallyl diphosphate. R139 lines the isopentenyl diphosphate pocket. K220 and Q258 together coordinate dimethylallyl diphosphate. Residues 274 to 301 adopt a coiled-coil conformation; that stretch reads GAEKGMMEMAEELKEKAKKELQVFDNKY.

This sequence belongs to the FPP/GGPP synthase family. As to quaternary structure, part of a heterodimeric geranyl(geranyl)diphosphate synthase. Interacts with GGPPS1 or GGPPS2, but not with GGPPS9. Interacts with LIL3.1 and LIL3.2. Mg(2+) is required as a cofactor. As to expression, expressed ubiquitously.

It localises to the plastid. The protein localises to the chloroplast thylakoid membrane. Functionally, heterodimeric geranyl(geranyl)-diphosphate (GPP) synthase small subunit. The small subunit alone is inactive in vitro while the large subunit GGPPS1 catalyzes mainly the production of geranygeranyl-diphosphate in vitro. Upon association of the two subunits, the product profile changes and the production of gerany-diphosphate is strongly increased. The chain is Heterodimeric geranylgeranyl pyrophosphate synthase small subunit, chloroplastic (GGR) from Arabidopsis thaliana (Mouse-ear cress).